Reading from the N-terminus, the 198-residue chain is Golgi to ER traffic protein 1 (198 aa).

Residues Met-1–Ile-6 are Lumenal-facing. A helical transmembrane segment spans residues Leu-7 to Ser-26. Residues Gln-27–Ile-110 lie on the Cytoplasmic side of the membrane. Residues Lys-73–Leu-106 are a coiled coil. A helical membrane pass occupies residues Ser-111–Phe-131. Residues Tyr-132–Ser-155 lie on the Lumenal side of the membrane. Residues Ile-156–Leu-172 form a helical membrane-spanning segment. The Cytoplasmic portion of the chain corresponds to Glu-173–Lys-198.

It belongs to the WRB/GET1 family. Component of the Golgi to ER traffic (GET) complex, which is composed of GET1, GET2 and GET3. Within the complex, GET1 and GET2 form a heterotetramer which is stabilized by phosphatidylinositol binding and which binds to the GET3 homodimer.

The protein localises to the endoplasmic reticulum membrane. It localises to the golgi apparatus membrane. Required for the post-translational delivery of tail-anchored (TA) proteins to the endoplasmic reticulum. Together with GET2, acts as a membrane receptor for soluble GET3, which recognizes and selectively binds the transmembrane domain of TA proteins in the cytosol. The GET complex cooperates with the HDEL receptor ERD2 to mediate the ATP-dependent retrieval of resident ER proteins that contain a C-terminal H-D-E-L retention signal from the Golgi to the ER. In Komagataella phaffii (strain GS115 / ATCC 20864) (Yeast), this protein is Golgi to ER traffic protein 1.